Consider the following 270-residue polypeptide: Interleukin-33 (270 aa).

The tract at residues 1–65 is homeodomain-like HTH domain; that stretch reads MKPKMKYSTN…EACYFRRETT (65 aa). Residues 1-94 constitute a propeptide that is removed on maturation; that stretch reads MKPKMKYSTN…CQQQSTVESF (94 aa). The tract at residues 64–111 is interaction with RELA; that stretch reads TTKRPSLKTDRKHKRHLVLAACQQQSTVESFAFGISGVQKYTRALHDS.

It belongs to the IL-1 family. Highly divergent. Forms a 1:1:1 heterotrimeric complex with its primary high-affinity receptor IL1RL1 and the coreceptor IL1RAP. Interacts with cargo receptor TMED10; the interaction mediates the translocation from the cytoplasm into the ERGIC (endoplasmic reticulum-Golgi intermediate compartment) and thereby secretion. The full-length protein can be released from cells and is able to signal via the IL1RL1/ST2 receptor. However, proteolytic processing by CELA1, CSTG/cathepsin G and ELANE/neutrophil elastase produces C-terminal peptides that are more active than the unprocessed full-length protein. May also be proteolytically processed by calpains. Proteolytic cleavage mediated by apoptotic caspases including CASP3 and CASP7 results in IL33 inactivation. In vitro proteolytic cleavage by CASP1 was reported but could not be confirmed in vivo suggesting that IL33 is probably not a direct substrate for that caspase.

Its subcellular location is the nucleus. The protein localises to the chromosome. It is found in the cytoplasm. It localises to the cytoplasmic vesicle. The protein resides in the secretory vesicle. Its subcellular location is the secreted. Its function is as follows. Cytokine that binds to and signals through the IL1RL1/ST2 receptor which in turn activates NF-kappa-B and MAPK signaling pathways in target cells. Involved in the maturation of Th2 cells inducing the secretion of T-helper type 2-associated cytokines. Also involved in activation of mast cells, basophils, eosinophils and natural killer cells. Acts as a chemoattractant for Th2 cells, and may function as an 'alarmin', that amplifies immune responses during tissue injury. Induces rapid UCP2-dependent mitochondrial rewiring that attenuates the generation of reactive oxygen species and preserves the integrity of Krebs cycle required for persistent production of itaconate and subsequent GATA3-dependent differentiation of inflammation-resolving alternatively activated macrophages. In terms of biological role, in quiescent endothelia the uncleaved form is constitutively and abundantly expressed, and acts as a chromatin-associated nuclear factor with transcriptional repressor properties, it may sequester nuclear NF-kappaB/RELA, lowering expression of its targets. This form is rapidely lost upon angiogenic or pro-inflammatory activation. The polypeptide is Interleukin-33 (IL33) (Pongo abelii (Sumatran orangutan)).